Reading from the N-terminus, the 305-residue chain is Small ribosomal subunit protein uS3 (305 aa).

In terms of domain architecture, KH type-2 spans 17–86; that stretch reads IDEFFSEELS…DPQVDVQEVD (70 aa). 2 stretches are compositionally biased toward acidic residues: residues 207–262 and 272–305; these read EPEG…EAET and AAEE…EEET. Residues 207 to 305 are disordered; the sequence is EPEGDVEELL…EDETTDEEET (99 aa).

It belongs to the universal ribosomal protein uS3 family. Part of the 30S ribosomal subunit.

In terms of biological role, binds the lower part of the 30S subunit head. The sequence is that of Small ribosomal subunit protein uS3 from Natronomonas pharaonis (strain ATCC 35678 / DSM 2160 / CIP 103997 / JCM 8858 / NBRC 14720 / NCIMB 2260 / Gabara) (Halobacterium pharaonis).